Consider the following 553-residue polypeptide: CTP synthase (553 aa).

Residues 1–275 (MPTETEYDPS…DQYVMEQFDM (275 aa)) are amidoligase domain. A CTP-binding site is contributed by S24. S24 contributes to the UTP binding site. Position 25 to 30 (25 to 30 (GLGKGI)) interacts with ATP. L-glutamine is bound at residue Y65. D82 contributes to the ATP binding site. 2 residues coordinate Mg(2+): D82 and E150. CTP is bound by residues 157 to 159 (DIE), 196 to 201 (KTKPTQ), and K232. UTP-binding positions include 196–201 (KTKPTQ) and K232. Residues 308–540 (KYALEDAYMS…LDAVLERADV (233 aa)) form the Glutamine amidotransferase type-1 domain. Position 362 (G362) interacts with L-glutamine. The active-site Nucleophile; for glutamine hydrolysis is C389. Residues 390 to 393 (LGFQ), E413, and R470 contribute to the L-glutamine site. Active-site residues include H513 and E515.

This sequence belongs to the CTP synthase family. Homotetramer.

The enzyme catalyses UTP + L-glutamine + ATP + H2O = CTP + L-glutamate + ADP + phosphate + 2 H(+). The catalysed reaction is L-glutamine + H2O = L-glutamate + NH4(+). It carries out the reaction UTP + NH4(+) + ATP = CTP + ADP + phosphate + 2 H(+). It participates in pyrimidine metabolism; CTP biosynthesis via de novo pathway; CTP from UDP: step 2/2. Its activity is regulated as follows. Allosterically activated by GTP, when glutamine is the substrate; GTP has no effect on the reaction when ammonia is the substrate. The allosteric effector GTP functions by stabilizing the protein conformation that binds the tetrahedral intermediate(s) formed during glutamine hydrolysis. Inhibited by the product CTP, via allosteric rather than competitive inhibition. Functionally, catalyzes the ATP-dependent amination of UTP to CTP with either L-glutamine or ammonia as the source of nitrogen. Regulates intracellular CTP levels through interactions with the four ribonucleotide triphosphates. This is CTP synthase from Halobacterium salinarum (strain ATCC 29341 / DSM 671 / R1).